An 84-amino-acid chain; its full sequence is Delta-thalatoxin-Hhe1a (84 aa).

The N-terminal stretch at Met1–Ala19 is a signal peptide. Residues Met20–Ala33 constitute a propeptide that is removed on maturation. Cystine bridges form between Cys38–Cys78, Cys40–Cys68, and Cys61–Cys79.

It belongs to the sea anemone sodium channel inhibitory toxin family. Type II subfamily.

It localises to the secreted. It is found in the nematocyst. Its function is as follows. Binds specifically to the voltage-gated sodium channel (Nav) and delays its inactivation. This is Delta-thalatoxin-Hhe1a from Heterodactyla hemprichii (Hemprich's sea anemone).